A 507-amino-acid polypeptide reads, in one-letter code: 2,3-bisphosphoglycerate-independent phosphoglycerate mutase (507 aa).

The Mn(2+) site is built by Asp13 and Ser63. Residue Ser63 is the Phosphoserine intermediate of the active site. Substrate is bound by residues His122, 152–153 (RD), Arg184, Arg190, 256–259 (RADR), and Lys330. Mn(2+) is bound by residues Asp397, His401, Asp438, His439, and His457.

The protein belongs to the BPG-independent phosphoglycerate mutase family. Monomer. Requires Mn(2+) as cofactor.

The catalysed reaction is (2R)-2-phosphoglycerate = (2R)-3-phosphoglycerate. The protein operates within carbohydrate degradation; glycolysis; pyruvate from D-glyceraldehyde 3-phosphate: step 3/5. In terms of biological role, catalyzes the interconversion of 2-phosphoglycerate and 3-phosphoglycerate. The protein is 2,3-bisphosphoglycerate-independent phosphoglycerate mutase of Chromobacterium violaceum (strain ATCC 12472 / DSM 30191 / JCM 1249 / CCUG 213 / NBRC 12614 / NCIMB 9131 / NCTC 9757 / MK).